Consider the following 341-residue polypeptide: tRNA N6-adenosine threonylcarbamoyltransferase (341 aa).

Residues histidine 111 and histidine 115 each contribute to the Fe cation site. Substrate contacts are provided by residues 134–138 (LVSGG), aspartate 167, glycine 180, and asparagine 274. Fe cation is bound at residue aspartate 302.

Belongs to the KAE1 / TsaD family. It depends on Fe(2+) as a cofactor.

It is found in the cytoplasm. The enzyme catalyses L-threonylcarbamoyladenylate + adenosine(37) in tRNA = N(6)-L-threonylcarbamoyladenosine(37) in tRNA + AMP + H(+). Required for the formation of a threonylcarbamoyl group on adenosine at position 37 (t(6)A37) in tRNAs that read codons beginning with adenine. Is involved in the transfer of the threonylcarbamoyl moiety of threonylcarbamoyl-AMP (TC-AMP) to the N6 group of A37, together with TsaE and TsaB. TsaD likely plays a direct catalytic role in this reaction. The sequence is that of tRNA N6-adenosine threonylcarbamoyltransferase from Paraburkholderia phymatum (strain DSM 17167 / CIP 108236 / LMG 21445 / STM815) (Burkholderia phymatum).